We begin with the raw amino-acid sequence, 155 residues long: Small ribosomal subunit protein uS7cz/uS7cy (155 aa).

The protein belongs to the universal ribosomal protein uS7 family. In terms of assembly, part of the 30S ribosomal subunit.

It localises to the plastid. The protein resides in the chloroplast. Functionally, one of the primary rRNA binding proteins, it binds directly to 16S rRNA where it nucleates assembly of the head domain of the 30S subunit. The sequence is that of Small ribosomal subunit protein uS7cz/uS7cy (rps7-A) from Guizotia abyssinica (Niger).